The following is a 107-amino-acid chain: Cytochrome c2 (107 aa).

Gln-1 carries the pyrrolidone carboxylic acid modification. Heme c-binding residues include Cys-13, Cys-16, His-17, and Met-79.

Belongs to the cytochrome c family. In terms of processing, binds 1 heme c group covalently per subunit.

It is found in the periplasm. In terms of biological role, cytochrome c2 is found mainly in purple, non-sulfur, photosynthetic bacteria where it functions as the electron donor to the oxidized bacteriochlorophyll in the photophosphorylation pathway. However, it may also have a role in the respiratory chain and is found in some non-photosynthetic bacteria. In Rhodoplanes tepidamans (Rhodoplanes cryptolactis), this protein is Cytochrome c2.